The sequence spans 360 residues: Histidinol-phosphate aminotransferase (360 aa).

Lys-222 carries the N6-(pyridoxal phosphate)lysine modification.

It belongs to the class-II pyridoxal-phosphate-dependent aminotransferase family. Histidinol-phosphate aminotransferase subfamily. In terms of assembly, homodimer. Pyridoxal 5'-phosphate serves as cofactor.

It carries out the reaction L-histidinol phosphate + 2-oxoglutarate = 3-(imidazol-4-yl)-2-oxopropyl phosphate + L-glutamate. It participates in amino-acid biosynthesis; L-histidine biosynthesis; L-histidine from 5-phospho-alpha-D-ribose 1-diphosphate: step 7/9. This is Histidinol-phosphate aminotransferase from Listeria monocytogenes serotype 4b (strain CLIP80459).